The chain runs to 212 residues: Regulatory protein RecX (212 aa).

Belongs to the RecX family.

Its subcellular location is the cytoplasm. Functionally, modulates RecA activity. The protein is Regulatory protein RecX of Clostridium botulinum (strain Eklund 17B / Type B).